Consider the following 122-residue polypeptide: Small ribosomal subunit protein uS13 (122 aa).

The disordered stretch occupies residues 97–122 (PVRGQRTHTNAKTRKGRSKLPIAGKK).

Belongs to the universal ribosomal protein uS13 family. Part of the 30S ribosomal subunit. Forms a loose heterodimer with protein S19. Forms two bridges to the 50S subunit in the 70S ribosome.

Located at the top of the head of the 30S subunit, it contacts several helices of the 16S rRNA. In the 70S ribosome it contacts the 23S rRNA (bridge B1a) and protein L5 of the 50S subunit (bridge B1b), connecting the 2 subunits; these bridges are implicated in subunit movement. Contacts the tRNAs in the A and P-sites. The protein is Small ribosomal subunit protein uS13 of Wolbachia pipientis subsp. Culex pipiens (strain wPip).